The following is a 309-amino-acid chain: Probable 2,4-dienoyl-CoA reductase 3 [(3E)-enoyl-CoA-producing] (309 aa).

Residues 32 to 37, R57, and D83 contribute to the NADP(+) site; that span reads GGGTGI. Substrate is bound at residue R57. F116 and S124 together coordinate substrate. Catalysis depends on Y166, which acts as the Proton acceptor. Residues K181 and 207 to 210 contribute to the NADP(+) site; that span reads PGPI. Substrate is bound at residue R218.

The protein belongs to the short-chain dehydrogenases/reductases (SDR) family. 2,4-dienoyl-CoA reductase subfamily.

The enzyme catalyses a (2E,4E)-dienoyl-CoA + NADPH + H(+) = a 4,5-saturated-(3E)-enoyl-CoA + NADP(+). It carries out the reaction a (2E,4Z)-dienoyl-CoA + NADPH + H(+) = a 4,5-saturated-(3E)-enoyl-CoA + NADP(+). Functionally, auxiliary enzyme of beta-oxidation. It participates in the metabolism of unsaturated fatty enoyl-CoA esters having double bonds in both even- and odd-numbered positions. Catalyzes the NADP-dependent reduction of 2,4-dienoyl-CoA to yield trans-3-enoyl-CoA. This chain is Probable 2,4-dienoyl-CoA reductase 3 [(3E)-enoyl-CoA-producing], found in Caenorhabditis elegans.